Here is a 265-residue protein sequence, read N- to C-terminus: NAD kinase (265 aa).

The active-site Proton acceptor is Asp-45. Residues 45-46 (DG), 122-123 (NE), Arg-148, Asp-150, 161-166 (TAYNKS), Ala-185, and Gln-223 contribute to the NAD(+) site.

Belongs to the NAD kinase family. It depends on a divalent metal cation as a cofactor.

It is found in the cytoplasm. It carries out the reaction NAD(+) + ATP = ADP + NADP(+) + H(+). Functionally, involved in the regulation of the intracellular balance of NAD and NADP, and is a key enzyme in the biosynthesis of NADP. Catalyzes specifically the phosphorylation on 2'-hydroxyl of the adenosine moiety of NAD to yield NADP. In Enterococcus faecalis (strain ATCC 700802 / V583), this protein is NAD kinase.